Reading from the N-terminus, the 330-residue chain is Beta-ketoacyl-[acyl-carrier-protein] synthase III (330 aa).

Catalysis depends on residues Cys114 and His257. An ACP-binding region spans residues 258 to 262 (QANLR). The active site involves Asn287.

This sequence belongs to the thiolase-like superfamily. FabH family. Homodimer.

The protein resides in the cytoplasm. It catalyses the reaction malonyl-[ACP] + acetyl-CoA + H(+) = 3-oxobutanoyl-[ACP] + CO2 + CoA. The protein operates within lipid metabolism; fatty acid biosynthesis. In terms of biological role, catalyzes the condensation reaction of fatty acid synthesis by the addition to an acyl acceptor of two carbons from malonyl-ACP. Catalyzes the first condensation reaction which initiates fatty acid synthesis and may therefore play a role in governing the total rate of fatty acid production. Possesses both acetoacetyl-ACP synthase and acetyl transacylase activities. Its substrate specificity determines the biosynthesis of branched-chain and/or straight-chain of fatty acids. In Nitratidesulfovibrio vulgaris (strain ATCC 29579 / DSM 644 / CCUG 34227 / NCIMB 8303 / VKM B-1760 / Hildenborough) (Desulfovibrio vulgaris), this protein is Beta-ketoacyl-[acyl-carrier-protein] synthase III.